The primary structure comprises 258 residues: uncharacterized protein (258 aa).

A signal peptide spans 1–23; the sequence is MVWCHYILLVLTFFLFTTFFTAA. Residues 24-64 are Cytoplasmic-facing; that stretch reads CPAIFTWLNSLFRLSNDSPHVVHTSIAEVGDIEDGRVDKDG. Residues 65–85 form a helical membrane-spanning segment; the sequence is VLFVDLEFFLGCLPFFFFALV. Residues 86–123 lie on the Extracellular side of the membrane; the sequence is DQSSSSSVCKPLSPSDAKRSSNSLLRLSLVSSNDSDSS. An N-linked (GlcNAc...) asparagine glycan is attached at asparagine 118. Residues 124 to 144 form a helical membrane-spanning segment; it reads VSVSTFAFFFFFLFFLFFVFT. The Cytoplasmic portion of the chain corresponds to 145–230; it reads CTFSSELTSS…SSSISFRISS (86 aa). A helical membrane pass occupies residues 231–251; that stretch reads IFFLCSLVFMWFFNCFSDLNV. The Extracellular segment spans residues 252 to 258; that stretch reads LLQIKHS.

It is found in the membrane. This is an uncharacterized protein from Saccharomyces cerevisiae (strain ATCC 204508 / S288c) (Baker's yeast).